A 624-amino-acid chain; its full sequence is Polygalacturonase 1 beta-like protein 2 (624 aa).

The signal sequence occupies residues 1–26; the sequence is MNNIEATLFLCFFCIFSSSNVHFAGA. An FXXY 1 repeat occupies 121 to 124; it reads FAAY. N-linked (GlcNAc...) asparagine glycosylation is present at N128. FXXY repeat units follow at residues 129–132, 143–146, 157–160, 171–174, 185–188, 199–202, 213–216, 227–230, 241–244, 255–258, and 269–272; these read FTNY, FKNY, FRRY, FTTY, FTSY, FSGY, and FTKY. N-linked (GlcNAc...) asparagine glycosylation occurs at N145. The interval 199 to 219 is disordered; it reads FTNYNTDANEPNGRFTSYSDK. N280 is a glycosylation site (N-linked (GlcNAc...) asparagine). FXXY repeat units follow at residues 283–286, 297–300, 311–314, 325–328, and 339–342; these read FTSY, FKGY, FKNY, FSSY, and FVNY. A glycan (N-linked (GlcNAc...) asparagine) is linked at N352. The FXXY 18 repeat unit spans residues 353 to 356; it reads FTGY. N364 carries an N-linked (GlcNAc...) asparagine glycan. FXXY repeat units follow at residues 367 to 370, 376 to 379, and 386 to 389; these read FKTY, FKVY, and FARY. N392 and N463 each carry an N-linked (GlcNAc...) asparagine glycan. Residues 409–623 form the BURP domain; it reads FFREAMLKEG…FENDMTWNII (215 aa).

As to expression, expressed in flowers and stems.

It is found in the secreted. The protein resides in the extracellular space. The protein localises to the apoplast. It localises to the cell wall. Involved in cell size determination. The sequence is that of Polygalacturonase 1 beta-like protein 2 from Arabidopsis thaliana (Mouse-ear cress).